The following is a 127-amino-acid chain: Large ribosomal subunit protein bL17 (127 aa).

It belongs to the bacterial ribosomal protein bL17 family. As to quaternary structure, part of the 50S ribosomal subunit. Contacts protein L32.

The sequence is that of Large ribosomal subunit protein bL17 from Legionella pneumophila (strain Corby).